We begin with the raw amino-acid sequence, 427 residues long: Serine--tRNA ligase (427 aa).

236-238 (TAE) provides a ligand contact to L-serine. 267–269 (RRE) contacts ATP. An L-serine-binding site is contributed by E290. 354 to 357 (EISS) serves as a coordination point for ATP. Position 390 (S390) interacts with L-serine.

It belongs to the class-II aminoacyl-tRNA synthetase family. Type-1 seryl-tRNA synthetase subfamily. Homodimer. The tRNA molecule binds across the dimer.

It localises to the cytoplasm. The catalysed reaction is tRNA(Ser) + L-serine + ATP = L-seryl-tRNA(Ser) + AMP + diphosphate + H(+). It carries out the reaction tRNA(Sec) + L-serine + ATP = L-seryl-tRNA(Sec) + AMP + diphosphate + H(+). The protein operates within aminoacyl-tRNA biosynthesis; selenocysteinyl-tRNA(Sec) biosynthesis; L-seryl-tRNA(Sec) from L-serine and tRNA(Sec): step 1/1. Catalyzes the attachment of serine to tRNA(Ser). Is also able to aminoacylate tRNA(Sec) with serine, to form the misacylated tRNA L-seryl-tRNA(Sec), which will be further converted into selenocysteinyl-tRNA(Sec). This chain is Serine--tRNA ligase, found in Picosynechococcus sp. (strain ATCC 27264 / PCC 7002 / PR-6) (Agmenellum quadruplicatum).